A 134-amino-acid chain; its full sequence is D-ribose pyranase (134 aa).

H20 acts as the Proton donor in catalysis. Residues D28, H101, and 123 to 125 contribute to the substrate site; that span reads YCN.

This sequence belongs to the RbsD / FucU family. RbsD subfamily. Homodecamer.

The protein localises to the cytoplasm. The enzyme catalyses beta-D-ribopyranose = beta-D-ribofuranose. Its pathway is carbohydrate metabolism; D-ribose degradation; D-ribose 5-phosphate from beta-D-ribopyranose: step 1/2. Its function is as follows. Catalyzes the interconversion of beta-pyran and beta-furan forms of D-ribose. This Pseudomonas fluorescens (strain Pf0-1) protein is D-ribose pyranase.